A 32-amino-acid chain; its full sequence is Fibrinolytic enzyme (32 aa).

The N-terminus is blocked.

With respect to regulation, inhibited by phenylmethanesulfonyl fluoride (PMSF). Not inhibited by EDTA, EGTA, beta-mercaptoethanol, indoacetamide, benzamidine, aprotinin, pepstatin A and trypsin inhibitor. Its function is as follows. Plasmin-like serine protease. Has fibrinolytic and fibrinogenolytic but not plasminogenolytic activity. Cleaves after Arg and Lys residues. The sequence is that of Fibrinolytic enzyme from Hediste japonica (Polychaete worm).